A 51-amino-acid chain; its full sequence is Large ribosomal subunit protein eL39 (51 aa).

The tract at residues 32–51 (KGSVKQHPKMRHWRRNTLKK) is disordered. Positions 33 to 51 (GSVKQHPKMRHWRRNTLKK) are enriched in basic residues.

It belongs to the eukaryotic ribosomal protein eL39 family.

In Methanococcus vannielii (strain ATCC 35089 / DSM 1224 / JCM 13029 / OCM 148 / SB), this protein is Large ribosomal subunit protein eL39.